Here is a 166-residue protein sequence, read N- to C-terminus: MSDTTNEVEETYEVDEQGIAYSSESAPSADAPLRPATIAPANATGRRKEAVARVRLVPGTGEWTVNGRTLDSYFPNKLHQQVVNEPFVTTQLEGRFDVIARIHGGGITGQAGALRLGVARALNAVDVEANRPSLKKAGLLTRDARVIERKKAGLKKARKAPQFSKR.

Over residues 1-16 (MSDTTNEVEETYEVDE) the composition is skewed to acidic residues. The interval 1-45 (MSDTTNEVEETYEVDEQGIAYSSESAPSADAPLRPATIAPANATG) is disordered.

This sequence belongs to the universal ribosomal protein uS9 family.

The protein is Small ribosomal subunit protein uS9 of Nocardioides sp. (strain ATCC BAA-499 / JS614).